The chain runs to 286 residues: Deleted in azoospermia-like (286 aa).

The 76-residue stretch at 30–105 (NTVFVGGIDI…KKLKLGPAIR (76 aa)) folds into the RRM domain. Positions 155–180 (ACPYPSSPPMAIQQIPVGCQQPSYFQ) constitute a DAZ domain.

The protein belongs to the RRM DAZ family. Interacts with the C-terminus of pabp1 and with epabp. Prior to oocyte maturation, found in a complex with epabp and pum2 proteins and spdy1 mRNA; pum2 dissociates from the complex during maturation. As to expression, germ-line specific; expressed in adult testis and ovary. Localized specifically to the oocyte and embryonic germ plasm and to migrating primordial germ cells (PGCs).

It is found in the cytoplasm. Functionally, RNA-binding protein that is required for primordial germ cell (PGC) differentiation and indirectly necessary for the migration of PGCs through the endoderm. May promote meiotic cell division during spermatogenesis. Shows a preference for G- and U-rich RNAs and probably binds the 3'-UTR of target mRNAs. Stimulates the initiation of translation of mRNAs through the recruitment of poly(A)-binding proteins (PABPs). The chain is Deleted in azoospermia-like from Xenopus tropicalis (Western clawed frog).